The chain runs to 484 residues: E-selectin (484 aa).

The N-terminal stretch at 1–22 (MIASQFLSALPLVLLLLRESGA) is a signal peptide. The 118-residue stretch at 23-140 (WSYSASTETM…CSKKKLALCY (118 aa)) folds into the C-type lectin domain. At 23–429 (WSYSASTETM…CEAPAESKIP (407 aa)) the chain is on the extracellular side. Cystine bridges form between Cys-41-Cys-139, Cys-112-Cys-131, Cys-144-Cys-155, Cys-149-Cys-164, Cys-166-Cys-175, Cys-181-Cys-222, Cys-194-Cys-204, Cys-208-Cys-235, Cys-240-Cys-285, Cys-271-Cys-298, Cys-303-Cys-348, Cys-334-Cys-361, Cys-366-Cys-407, and Cys-393-Cys-420. N-linked (GlcNAc...) asparagine glycans are attached at residues Asn-61, Asn-65, and Asn-79. Ca(2+) is bound by residues Glu-102, Asn-104, and Glu-110. A carbohydrate contacts are provided by residues 102–110 (EPNNKQSNE), 114–119 (EIYIKR), and 127–129 (NDE). Ca(2+) contacts are provided by Asn-127 and Asp-128. An EGF-like domain is found at 141–176 (TAACTPTSCSGHGECIETINSSTCQCYPGFRGLQCE). N-linked (GlcNAc...) asparagine glycosylation is present at Asn-160. Sushi domains lie at 179-237 (VECD…TCKA), 251-300 (VSCN…VCKA), 301-363 (VKCP…SCQV), and 364-422 (VQCS…TCEA). Residue Asn-201 is glycosylated (N-linked (GlcNAc...) asparagine). N-linked (GlcNAc...) asparagine glycosylation is present at Asn-254. Residues Asn-376 and Asn-400 are each glycosylated (N-linked (GlcNAc...) asparagine). Residues 430 to 451 (LAMGLAAGGVSFMTSASFLLWL) form a helical membrane-spanning segment. Residues 452 to 484 (LKRLRKRAKKFVPSSSSECLQPNGSYQMPSDLI) are Cytoplasmic-facing.

Belongs to the selectin/LECAM family. As to quaternary structure, interacts with SELPLG/PSGL1 and PODXL2 through the sialyl Lewis X epitope. SELPLG sulfation appears not to be required for this interaction.

The protein localises to the cell membrane. Its function is as follows. Cell-surface glycoprotein having a role in immunoadhesion. Mediates in the adhesion of blood neutrophils in cytokine-activated endothelium through interaction with SELPLG/PSGL1. May have a role in capillary morphogenesis. This is E-selectin (SELE) from Sus scrofa (Pig).